A 296-amino-acid polypeptide reads, in one-letter code: Fructose-bisphosphate aldolase class 1 (296 aa).

Glu-175 acts as the Proton acceptor in catalysis. Lys-212 (schiff-base intermediate with dihydroxyacetone-P) is an active-site residue.

This sequence belongs to the class I fructose-bisphosphate aldolase family.

It catalyses the reaction beta-D-fructose 1,6-bisphosphate = D-glyceraldehyde 3-phosphate + dihydroxyacetone phosphate. The protein operates within carbohydrate degradation; glycolysis; D-glyceraldehyde 3-phosphate and glycerone phosphate from D-glucose: step 4/4. The sequence is that of Fructose-bisphosphate aldolase class 1 from Staphylococcus aureus (strain USA300).